The following is a 763-amino-acid chain: Xaa-Pro dipeptidyl-peptidase (763 aa).

Catalysis depends on charge relay system residues S348, D468, and H498.

It belongs to the peptidase S15 family. Homodimer.

The protein resides in the cytoplasm. It carries out the reaction Hydrolyzes Xaa-Pro-|- bonds to release unblocked, N-terminal dipeptides from substrates including Ala-Pro-|-p-nitroanilide and (sequentially) Tyr-Pro-|-Phe-Pro-|-Gly-Pro-|-Ile.. Removes N-terminal dipeptides sequentially from polypeptides having unsubstituted N-termini provided that the penultimate residue is proline. This Lactococcus lactis subsp. cremoris (Streptococcus cremoris) protein is Xaa-Pro dipeptidyl-peptidase (pepX).